Here is a 33-residue protein sequence, read N- to C-terminus: Zinc metalloproteinase-disintegrin-like moojenin (33 aa).

Residues 8–33 (PPVCGNELLEVGEECDCGTPENCQNE) enclose the Disintegrin domain. Ca(2+)-binding residues include V10, N13, L15, E17, E20, and D23. 2 disulfides stabilise this stretch: C11-C30 and C24-C30.

The protein belongs to the venom metalloproteinase (M12B) family. P-III subfamily. P-IIIb sub-subfamily. Monomer. Requires Zn(2+) as cofactor. The N-terminus (from the N-terminal region of the metalloproteinase domain) is blocked. As to expression, expressed by the venom gland.

It is found in the secreted. With respect to regulation, the fibrinogenolytic and coagulant activities of the moojenin were abolished by preincubation with EDTA, 1,10-phenanthroline and beta-mercaptoethanol. Metalloproteinase moojenin: snake venom metalloproteinase that cleaves both alpha- and beta-chains of fibrinogen, but not the gamma-chain. Shows a coagulant activity on bovine plasma about 3.1 fold lower than crude venom. Renders the blood incoagulable when intraperitoneally administered into mice. Induces necrosis in liver and muscle, but does not cause histological alterations in mouse lungs, kidney or heart. The polypeptide is Zinc metalloproteinase-disintegrin-like moojenin (Bothrops moojeni (Lance-headed viper)).